Here is an 803-residue protein sequence, read N- to C-terminus: Spondin-1 (803 aa).

Residues 1-23 form the signal peptide; that stretch reads MGLIFQPLFWQYVATSYALMVLG. Residues 24–190 enclose the Reelin domain; that stretch reads FLDETVEKAI…DLTLEGGNEK (167 aa). 14 cysteine pairs are disulfide-bonded: Cys39/Cys124, Cys152/Cys178, Cys195/Cys331, Cys196/Cys335, Cys198/Cys409, Cys437/Cys474, Cys448/Cys483, Cys453/Cys488, Cys496/Cys532, Cys507/Cys511, Cys542/Cys548, Cys553/Cys589, Cys564/Cys568, and Cys599/Cys604. The Spondin domain maps to 191 to 383; that stretch reads TIPDCCACGT…LTSLDHPQSP (193 aa). A glycan (N-linked (GlcNAc...) asparagine) is linked at Asn210. The Ca(2+) site is built by Asp320, Asp349, and Asp353. The segment at 353-389 is disordered; the sequence is DSGVTYESPNKPTIPQDKIRPLTSLDHPQSPSMTRGG. Residues 354–365 show a composition bias toward polar residues; the sequence is SGVTYESPNKPT. 5 consecutive TSP type-1 domains span residues 436–489, 495–549, 552–605, 608–662, and 664–717; these read TCIY…PGCS, TCMM…EECE, SCIV…PECH, PCVL…PECP, and SCEL…RKCQ. Residue Asn677 is glycosylated (N-linked (GlcNAc...) asparagine). The interval 722–741 is disordered; sequence NERRHLKDAREKRRSEKIKE. One can recognise a TSP type-1 6 domain in the interval 750-802; that stretch reads VCKMKPWTAWTECTKFCGGGIQERFMTVKKRFKSSQFTSCKDKKEIRACNVHP.

As to expression, expressed at high levels in the floor plate.

It is found in the secreted. The protein resides in the extracellular space. The protein localises to the extracellular matrix. In terms of biological role, promotes the attachment of spinal cord and sensory neuron cells and the outgrowth of neurites in vitro. May contribute to the growth and guidance of axons in both the spinal cord and the PNS. In Xenopus laevis (African clawed frog), this protein is Spondin-1 (spon1).